Consider the following 115-residue polypeptide: MKVEKEFPLMNFSLRRLPLFILIKTRKQTIEMNLRKKGHGIFFSRFGVFISKKKNHINICTLLLTKHPYTKGFPRQNVVETILFRRNSKTHFGRPATRRRPLGEREVNPSARSLG.

Residues 90 to 100 (THFGRPATRRR) are compositionally biased toward basic residues. A disordered region spans residues 90 to 115 (THFGRPATRRRPLGEREVNPSARSLG).

This is an uncharacterized protein from Saccharomyces cerevisiae (strain ATCC 204508 / S288c) (Baker's yeast).